The sequence spans 276 residues: Ice-binding protein (276 aa).

An N-terminal signal peptide occupies residues 1-24 (MKILKRIPVLAVLLVGLMTNCSND). The Ice-binding site motif (T-A/G-X-T/N) 1 signature appears at 79-82 (TGIT). Residues Cys-107 and Cys-124 are joined by a disulfide bond. 2 short sequence motifs (ice-binding site motif (T-A/G-X-T/N)) span residues 245 to 248 (TGIN) and 263 to 266 (TAVT).

It belongs to the ice-binding protein family. Monomer.

It is found in the secreted. Its function is as follows. Has antifreeze activity for survival in a subzero environment. Binds to the surface of ice crystals and inhibits their growth. Has high thermal hysteresis (TH) activity, which is the ability to lower the freezing point of an aqueous solution below its melting point, and thus the freezing of the cell fluid can be prevented protecting the organism from ice damage. The TH activity of this protein is 2.2 degrees Celsius at 5 uM and 2.5 degrees Celsius at 50 uM. The chain is Ice-binding protein from Flavobacterium frigoris (strain PS1).